We begin with the raw amino-acid sequence, 143 residues long: Transcriptional regulator MraZ (143 aa).

SpoVT-AbrB domains lie at 5–47 and 76–119; these read TYEP…SAEE and ASDE…DAAA.

It belongs to the MraZ family. As to quaternary structure, forms oligomers.

It is found in the cytoplasm. The protein localises to the nucleoid. The chain is Transcriptional regulator MraZ from Kocuria rhizophila (strain ATCC 9341 / DSM 348 / NBRC 103217 / DC2201).